The chain runs to 171 residues: MAEKRNIFLVGPMGAGKSTIGRHLAQMLHLEFHDSDQEIESRTGADIAWVFDVEGEEGFRIRETQVVADLTEKQGIVLATGGGSIQSKEIRNNLSARGIVVYLETTIDKQVARTQRDKRRPLLQVDDPREVLESLAEVRNPLYEEIADVIVKTDEQSAKVVANQIIEQLGF.

An ATP-binding site is contributed by 14 to 19 (GAGKST). Ser18 contributes to the Mg(2+) binding site. Positions 36, 60, and 82 each coordinate substrate. ATP is bound at residue Arg120. Arg139 is a binding site for substrate. Gln156 contributes to the ATP binding site.

Belongs to the shikimate kinase family. In terms of assembly, monomer. Mg(2+) is required as a cofactor.

The protein localises to the cytoplasm. It catalyses the reaction shikimate + ATP = 3-phosphoshikimate + ADP + H(+). It participates in metabolic intermediate biosynthesis; chorismate biosynthesis; chorismate from D-erythrose 4-phosphate and phosphoenolpyruvate: step 5/7. Catalyzes the specific phosphorylation of the 3-hydroxyl group of shikimic acid using ATP as a cosubstrate. In Shewanella pealeana (strain ATCC 700345 / ANG-SQ1), this protein is Shikimate kinase.